We begin with the raw amino-acid sequence, 101 residues long: Integration host factor subunit beta (101 aa).

It belongs to the bacterial histone-like protein family. In terms of assembly, heterodimer of an alpha and a beta chain.

Its function is as follows. This protein is one of the two subunits of integration host factor, a specific DNA-binding protein that functions in genetic recombination as well as in transcriptional and translational control. The protein is Integration host factor subunit beta of Rhodopseudomonas palustris (strain BisB5).